Reading from the N-terminus, the 527-residue chain is MASSQLAKEIAKRRTFAIISHPDAGKTTITEKLLLFGNAIQLAGSVKGKRGPHAKSDWMTMEQERGISVTSSVMQFPYKERVVNLLDTPGHEDFSEDTYRTLTAVDSVLMVIDGAKGVEDRTIKLMEVCRLRDTPILSFINKMDRDIRDPVEVMDEIEDVLKIAAAPINWPIGMGKEFKGVYNLYTDTIHLYEHGQGHTIPEDIQIKGLDSEEASALLGAYAEDVREEIELVRGATHEFDLDAYHAGELTPVFFGTALGNFGVREMLDGFVEWAPAPLDRDTAERKVAADEDKFSGFIFKIQANMDPKHRDRIAFMRVCSGRYSQGMKMRHVRLGKDVKIADAVTFLAGDRSQVEEAISGDIIGLHNHGTIQIGDTFSSGEILKFTGIPHFAPELFRRIRLKDPLKTKQLQRGLQQLSEEGSTQVFFPLNNNDIVVGAVGVLQFEVVAYRLKDEYKVEAIYEPVNVNTARWVDCSDDKKLAEFKRKCSDNLALDGGGHLTYLAPTRVNLSLSEERYPDVAFRATREH.

A tr-type G domain is found at 11 to 278; it reads AKRRTFAIIS…GFVEWAPAPL (268 aa). GTP-binding positions include 20–27, 87–91, and 141–144; these read SHPDAGKT, DTPGH, and NKMD.

This sequence belongs to the TRAFAC class translation factor GTPase superfamily. Classic translation factor GTPase family. PrfC subfamily.

The protein localises to the cytoplasm. Functionally, increases the formation of ribosomal termination complexes and stimulates activities of RF-1 and RF-2. It binds guanine nucleotides and has strong preference for UGA stop codons. It may interact directly with the ribosome. The stimulation of RF-1 and RF-2 is significantly reduced by GTP and GDP, but not by GMP. In Teredinibacter turnerae (strain ATCC 39867 / T7901), this protein is Peptide chain release factor 3.